A 518-amino-acid polypeptide reads, in one-letter code: Ankyrin repeat and SOCS box protein 3 (518 aa).

ANK repeat units follow at residues 9 to 38, 42 to 71, 78 to 107, 111 to 140, 145 to 174, 178 to 207, 211 to 240, 246 to 275, 279 to 308, 315 to 346, and 348 to 373; these read DTCSTVGLAAREGNVKVLRKLLKKGRSVDV, RGWMPIHEAAYHNSVECLQMLINADSSENY, EGFCALHLAASQGHWKIVQILLEAGADPNA, EETTPLFLAVENGQIDVLRLLLQHGANVNG, CGWNSLHQASFQENAEIIKLLLRKGANKEC, FGITPLFVAAQYGKLESLSILISSGANVNC, DKATPLFIAAQEGHTKCVELLLSSGADPDL, SWQLPIHAAAQMGHTKILDLLIPLTNRACD, NKVSPVYSAVFGGHEDCLEILLRNGYSPDA, GFSSPVCMAFQKDCEFFGIVNILLKYGAQINE, and HLAYCLKYEKFSIFRYFLRKGCSLGP. An SOCS box domain is found at 441–504; that stretch reads MLSARASNAW…HNYLLYEDVL (64 aa).

Belongs to the ankyrin SOCS box (ASB) family. As to quaternary structure, interacts with ELOB and TNFRSF1B.

It localises to the cytoplasm. It functions in the pathway protein modification; protein ubiquitination. Its function is as follows. Probable substrate-recognition component of a SCF-like ECS (Elongin-Cullin-SOCS-box protein) E3 ubiquitin-protein ligase complex which mediates the ubiquitination and subsequent proteasomal degradation of target proteins. Recognizes TNFRSF1B. Plays a role in the down-regulation of antiviral innate immunity by targeting MAVS for ubiquitin-proteasomal degradation. Also destabilizes TRAF6 by enhancing its 'Lys-48'-linked polyubiquitination. The chain is Ankyrin repeat and SOCS box protein 3 (ASB3) from Homo sapiens (Human).